The primary structure comprises 326 residues: GTP cyclohydrolase MptA (326 aa).

The protein belongs to the GTP cyclohydrolase IV family. As to quaternary structure, homodimer. It depends on Fe(2+) as a cofactor.

It catalyses the reaction GTP + H2O = 7,8-dihydroneopterin 2',3'-cyclic phosphate + formate + diphosphate + H(+). It participates in cofactor biosynthesis; 5,6,7,8-tetrahydromethanopterin biosynthesis. Functionally, converts GTP to 7,8-dihydro-D-neopterin 2',3'-cyclic phosphate, the first intermediate in the biosynthesis of coenzyme methanopterin. This Methanoregula boonei (strain DSM 21154 / JCM 14090 / 6A8) protein is GTP cyclohydrolase MptA.